A 465-amino-acid chain; its full sequence is Sushi repeat-containing protein SRPX2 (465 aa).

A signal peptide spans 1–23 (MAIQLTRRGALSLLLFLTPAVMP). Sushi domains follow at residues 69-119 (ATCY…YCRQ), 120-178 (MRCH…VCVD), and 262-321 (RRCP…VCVP). 4 cysteine pairs are disulfide-bonded: Cys-71/Cys-105, Cys-91/Cys-117, Cys-122/Cys-163, and Cys-149/Cys-176. Positions 177–261 (VDIDPPKIRC…SCKFIVKVQV (85 aa)) constitute an HYR domain. Intrachain disulfides connect Cys-264-Cys-306 and Cys-292-Cys-319.

Forms homooligomers. Interacts with PLAUR (via the UPAR/Ly6 domains), ADAMTS4 and CTSB. Interacts with HGF; the interaction increases the mitogenic activity of HGF. Contains chondroitin sulfate chains.

The protein resides in the secreted. It is found in the cytoplasm. Its subcellular location is the cell surface. It localises to the synapse. In terms of biological role, acts as a ligand for the urokinase plasminogen activator surface receptor. Plays a role in angiogenesis by inducing endothelial cell migration and the formation of vascular network (cords). Involved in cellular migration and adhesion. Increases the phosphorylation levels of FAK. Interacts with and increases the mitogenic activity of HGF. Promotes synapse formation. The sequence is that of Sushi repeat-containing protein SRPX2 (SRPX2) from Bos taurus (Bovine).